We begin with the raw amino-acid sequence, 217 residues long: Probable transaldolase (217 aa).

The active-site Schiff-base intermediate with substrate is Lys-83.

Belongs to the transaldolase family. Type 3B subfamily.

It localises to the cytoplasm. It catalyses the reaction D-sedoheptulose 7-phosphate + D-glyceraldehyde 3-phosphate = D-erythrose 4-phosphate + beta-D-fructose 6-phosphate. It participates in carbohydrate degradation; pentose phosphate pathway; D-glyceraldehyde 3-phosphate and beta-D-fructose 6-phosphate from D-ribose 5-phosphate and D-xylulose 5-phosphate (non-oxidative stage): step 2/3. In terms of biological role, transaldolase is important for the balance of metabolites in the pentose-phosphate pathway. The protein is Probable transaldolase of Jannaschia sp. (strain CCS1).